A 288-amino-acid polypeptide reads, in one-letter code: Thymidylate synthase (288 aa).

Residues arginine 21 and 150-151 (RR) each bind dUMP. Residue cysteine 170 is the Nucleophile of the active site. DUMP contacts are provided by residues 190–193 (RSGD), asparagine 201, and 231–233 (HIY). Aspartate 193 contacts (6R)-5,10-methylene-5,6,7,8-tetrahydrofolate. Alanine 287 is a binding site for (6R)-5,10-methylene-5,6,7,8-tetrahydrofolate.

This sequence belongs to the thymidylate synthase family. Bacterial-type ThyA subfamily. Homodimer.

Its subcellular location is the cytoplasm. The catalysed reaction is dUMP + (6R)-5,10-methylene-5,6,7,8-tetrahydrofolate = 7,8-dihydrofolate + dTMP. Its pathway is pyrimidine metabolism; dTTP biosynthesis. In terms of biological role, catalyzes the reductive methylation of 2'-deoxyuridine-5'-monophosphate (dUMP) to 2'-deoxythymidine-5'-monophosphate (dTMP) while utilizing 5,10-methylenetetrahydrofolate (mTHF) as the methyl donor and reductant in the reaction, yielding dihydrofolate (DHF) as a by-product. This enzymatic reaction provides an intracellular de novo source of dTMP, an essential precursor for DNA biosynthesis. This is Thymidylate synthase from Acholeplasma laidlawii (strain PG-8A).